Here is a 460-residue protein sequence, read N- to C-terminus: V-type ATP synthase beta chain (460 aa).

This sequence belongs to the ATPase alpha/beta chains family.

In terms of biological role, produces ATP from ADP in the presence of a proton gradient across the membrane. The V-type beta chain is a regulatory subunit. In Acetivibrio thermocellus (strain ATCC 27405 / DSM 1237 / JCM 9322 / NBRC 103400 / NCIMB 10682 / NRRL B-4536 / VPI 7372) (Clostridium thermocellum), this protein is V-type ATP synthase beta chain.